We begin with the raw amino-acid sequence, 107 residues long: Iron-sulfur cluster assembly protein CyaY (107 aa).

Belongs to the frataxin family.

Functionally, involved in iron-sulfur (Fe-S) cluster assembly. May act as a regulator of Fe-S biogenesis. This is Iron-sulfur cluster assembly protein CyaY from Edwardsiella ictaluri (strain 93-146).